We begin with the raw amino-acid sequence, 359 residues long: Fructose-1,6-bisphosphatase class 1 (359 aa).

Residues E95, D117, L119, and D120 each contribute to the Mg(2+) site. Residues 120-123 (DGSS) and N212 each bind substrate. E284 contacts Mg(2+).

This sequence belongs to the FBPase class 1 family. Homotetramer. It depends on Mg(2+) as a cofactor.

The protein localises to the cytoplasm. It catalyses the reaction beta-D-fructose 1,6-bisphosphate + H2O = beta-D-fructose 6-phosphate + phosphate. Its pathway is carbohydrate biosynthesis; gluconeogenesis. This is Fructose-1,6-bisphosphatase class 1 from Hydrogenophilus thermoluteolus (Pseudomonas hydrogenothermophila).